The chain runs to 56 residues: UPF0291 protein Clos_1191 (56 aa).

This sequence belongs to the UPF0291 family.

The protein resides in the cytoplasm. The protein is UPF0291 protein Clos_1191 of Alkaliphilus oremlandii (strain OhILAs) (Clostridium oremlandii (strain OhILAs)).